Consider the following 351-residue polypeptide: MAAAAPATAAVRRMKLGSQGLEVSAQGLGCMGMSAFYGPPKPEPDMVALIHHAVAAGVTLLDTSDIYGPHTNELLLGKALQGGVRDKVELATKFGIAFEDGKRDVRGDPAYVRAACEGSLRRLGVDSIDLYYQHRVDKKVPIEVTIGELKKLVEEGKIKYIGLSEASASTIRRAHAVHPITAVQLEWSLWSRDVEEDIIPTCRELGIGIVAYSPLGRGFFSAGAKLVESLSDQDFRKHIPRFQQENLEKNAEIFERVNAMAARKGCTPSQLALAWVHHQGSDVCPIPGTTKIENLNQNIGALSVKLTPEEMAELESYASTDDVRGDRYPQAMANTTWQNSETPPLSSWKAQ.

Tyr67 serves as the catalytic Proton donor. His134 contacts substrate. NADP(+) is bound at residue 213-223 (SPLGRGFFSAG). Residues 317–351 (YASTDDVRGDRYPQAMANTTWQNSETPPLSSWKAQ) are disordered. The segment covering 332–351 (MANTTWQNSETPPLSSWKAQ) has biased composition (polar residues).

Belongs to the aldo/keto reductase family.

This chain is Probable aldo-keto reductase 2, found in Oryza sativa subsp. japonica (Rice).